The following is a 306-amino-acid chain: MSNEFINFEKISRESWKTLHQKAKALLTQEELKSITSLNDNISINDVIDIYLPLINLIQVYKIAQENLSFSKSLFLKKDIQLRPFIIGISGSVAVGKSTTSRLLQLLLSRTHSNSQVELVTTDGFLYPNQFLIEQGLLNRKGFPESYNMELLLDFLDSIKNGQTAFAPVYSHDIYDIIPNQKQSFNNPDFLIVEGINVFQNQQNNRLYMSDYFDFSIYIDADSSHIETWYIERFLSILKLAKRDPHNYYAQYAQLPRSEAIAFARNVWKTVNLENLEKFIEPTRNRAELILHKSADHKIDEIYLKK.

91-98 contacts ATP; the sequence is GSVAVGKS.

This sequence belongs to the prokaryotic pantothenate kinase family.

It is found in the cytoplasm. It carries out the reaction (R)-pantothenate + ATP = (R)-4'-phosphopantothenate + ADP + H(+). Its pathway is cofactor biosynthesis; coenzyme A biosynthesis; CoA from (R)-pantothenate: step 1/5. The sequence is that of Pantothenate kinase (coaA) from Streptococcus pyogenes serotype M18 (strain MGAS8232).